The following is a 351-amino-acid chain: MSGQKLTAANLVSAIDSLKKNVNYNYVNSSNTHTIQIVHVEKPEGPIKIKRGDTETSISKQAIWRLADALSTGEPVNVDRVFGASYNFRSALEALLAHTPEIYWCKLQRIQPGLNKSEVVEGHKHIIWLPDRPHEKGVMKEYETDVVISEIPSNNVVYDALSLPSTHSEIDIDVKRRHVQIQIALSAIGFQLGFRTWIARNDQGISYGDKKIADLDGIVQKIESEKLISSFDGAVQAAMNIDCIWFRNGKLMPAVMEVEHSTGVRSGLARMKQLKDLLPPYANTRWVIVAPDEDRDKVFKEANVPMFKNLDTQYFPYSAVEELYSLCIRRKLTNKAVNEEFLDCFMEKCVM.

The enzyme catalyses Endonucleolytic cleavage of DNA to give specific double-stranded fragments with terminal 5'-phosphates.. Its function is as follows. A P subtype restriction enzyme that recognizes the double-stranded sequence 5'-N(12)RCCGGYN(12)-3' and cleaves on both sides of the recognition sequence. The protein is Type II restriction enzyme NmeDI (nmeDIRP) of Neisseria meningitidis serogroup C.